We begin with the raw amino-acid sequence, 219 residues long: tRNA (guanine-N(7)-)-methyltransferase (219 aa).

S-adenosyl-L-methionine-binding residues include glutamate 44, aspartate 69, glutamate 102, and asparagine 125. 2 residues coordinate substrate: lysine 129 and aspartate 161.

Belongs to the class I-like SAM-binding methyltransferase superfamily. TrmB family.

It catalyses the reaction guanosine(46) in tRNA + S-adenosyl-L-methionine = N(7)-methylguanosine(46) in tRNA + S-adenosyl-L-homocysteine. It participates in tRNA modification; N(7)-methylguanine-tRNA biosynthesis. Catalyzes the formation of N(7)-methylguanine at position 46 (m7G46) in tRNA. This is tRNA (guanine-N(7)-)-methyltransferase from Clostridium perfringens (strain 13 / Type A).